A 102-amino-acid chain; its full sequence is Small ribosomal subunit protein uS10 (102 aa).

It belongs to the universal ribosomal protein uS10 family. Part of the 30S ribosomal subunit.

Its function is as follows. Involved in the binding of tRNA to the ribosomes. This chain is Small ribosomal subunit protein uS10, found in Rhodopseudomonas palustris (strain BisB18).